Consider the following 132-residue polypeptide: uncharacterized protein (132 aa).

The helical transmembrane segment at 105–125 threads the bilayer; that stretch reads VHGYVVFWLSILCILIIIFVY.

The protein localises to the membrane. This is an uncharacterized protein from Methanocaldococcus jannaschii (strain ATCC 43067 / DSM 2661 / JAL-1 / JCM 10045 / NBRC 100440) (Methanococcus jannaschii).